The following is a 346-amino-acid chain: Transcription factor 19 (346 aa).

Residues Tyr31–Leu88 enclose the FHA domain. Ser78 is subject to Phosphoserine. 2 disordered regions span residues Pro136–Pro168 and Leu190–Gly289. Residues Ser138–Ala147 are compositionally biased toward basic and acidic residues. Residues Leu190–Pro208 are compositionally biased toward polar residues. A compositionally biased stretch (basic and acidic residues) spans Glu250–Lys260. A PHD-type zinc finger spans residues Ala294–Gly343. Zn(2+) contacts are provided by Cys297, Cys299, Cys311, Cys314, His319, Cys322, Cys337, and Cys340.

It localises to the nucleus. In terms of biological role, potential transcription factor that may play a role in the regulation of genes involved in cell cycle G1/S transition. May bind to regulatory elements of genes, including the promoter of the transcription factor FOXO1. The sequence is that of Transcription factor 19 (TCF19) from Sus scrofa (Pig).